A 171-amino-acid chain; its full sequence is uncharacterized protein (171 aa).

The disordered stretch occupies residues 56-83 (TVGVNKNAKNGPTQSQTRSGSAGAQARM). Positions 57 to 77 (VGVNKNAKNGPTQSQTRSGSA) are enriched in polar residues. The J domain occupies 113–170 (KAFETLGLGASATTADIKAAYKDLVKKHHPDANGGDRGSEERFRAVIQAYQLLKQAGF).

This is an uncharacterized protein from Sinorhizobium sp.